Consider the following 170-residue polypeptide: Large ribosomal subunit protein uL10 (170 aa).

The protein belongs to the universal ribosomal protein uL10 family. Part of the ribosomal stalk of the 50S ribosomal subunit. The N-terminus interacts with L11 and the large rRNA to form the base of the stalk. The C-terminus forms an elongated spine to which L12 dimers bind in a sequential fashion forming a multimeric L10(L12)X complex.

Forms part of the ribosomal stalk, playing a central role in the interaction of the ribosome with GTP-bound translation factors. This Chlamydia caviae (strain ATCC VR-813 / DSM 19441 / 03DC25 / GPIC) (Chlamydophila caviae) protein is Large ribosomal subunit protein uL10.